The primary structure comprises 393 residues: Branched-chain-amino-acid aminotransferase, mitochondrial (393 aa).

A mitochondrion-targeting transit peptide spans 1–27; sequence MATAALRQIWIPRFLPVPWFLCGSRRY. Tyr169 is a substrate binding site. At Lys230 the chain carries N6-(pyridoxal phosphate)lysine. Lys322 is modified (N6-acetyllysine).

The protein belongs to the class-IV pyridoxal-phosphate-dependent aminotransferase family. Homodimer. Requires pyridoxal 5'-phosphate as cofactor.

The protein resides in the mitochondrion. The enzyme catalyses L-leucine + 2-oxoglutarate = 4-methyl-2-oxopentanoate + L-glutamate. It catalyses the reaction L-isoleucine + 2-oxoglutarate = (S)-3-methyl-2-oxopentanoate + L-glutamate. It carries out the reaction L-valine + 2-oxoglutarate = 3-methyl-2-oxobutanoate + L-glutamate. Functionally, catalyzes the first reaction in the catabolism of the essential branched chain amino acids leucine, isoleucine, and valine. May also function as a transporter of branched chain alpha-keto acids. This is Branched-chain-amino-acid aminotransferase, mitochondrial (BCAT2) from Bos taurus (Bovine).